Reading from the N-terminus, the 225-residue chain is ATP-dependent Clp protease proteolytic subunit (225 aa).

Catalysis depends on Ser-123, which acts as the Nucleophile. His-148 is a catalytic residue.

This sequence belongs to the peptidase S14 family. Fourteen ClpP subunits assemble into 2 heptameric rings which stack back to back to give a disk-like structure with a central cavity, resembling the structure of eukaryotic proteasomes.

It localises to the cytoplasm. The catalysed reaction is Hydrolysis of proteins to small peptides in the presence of ATP and magnesium. alpha-casein is the usual test substrate. In the absence of ATP, only oligopeptides shorter than five residues are hydrolyzed (such as succinyl-Leu-Tyr-|-NHMec, and Leu-Tyr-Leu-|-Tyr-Trp, in which cleavage of the -Tyr-|-Leu- and -Tyr-|-Trp bonds also occurs).. Functionally, cleaves peptides in various proteins in a process that requires ATP hydrolysis. Has a chymotrypsin-like activity. Plays a major role in the degradation of misfolded proteins. The protein is ATP-dependent Clp protease proteolytic subunit of Chlorobium luteolum (strain DSM 273 / BCRC 81028 / 2530) (Pelodictyon luteolum).